Here is a 212-residue protein sequence, read N- to C-terminus: Adenylate kinase (212 aa).

Position 10–15 (Gly10–Thr15) interacts with ATP. The interval Ser30 to Val59 is NMP. Residues Thr31, Arg36, Glu57–Val59, Gly86–Arg89, and Gln93 contribute to the AMP site. An LID region spans residues Gly127–Asp159. ATP contacts are provided by residues Arg128 and Thr137 to Phe138. The AMP site is built by Arg156 and Arg167. Gln195 provides a ligand contact to ATP.

Belongs to the adenylate kinase family. As to quaternary structure, monomer.

Its subcellular location is the cytoplasm. It catalyses the reaction AMP + ATP = 2 ADP. It functions in the pathway purine metabolism; AMP biosynthesis via salvage pathway; AMP from ADP: step 1/1. In terms of biological role, catalyzes the reversible transfer of the terminal phosphate group between ATP and AMP. Plays an important role in cellular energy homeostasis and in adenine nucleotide metabolism. The polypeptide is Adenylate kinase (Streptococcus pyogenes serotype M5 (strain Manfredo)).